Consider the following 378-residue polypeptide: 3-dehydroquinate synthase (378 aa).

NAD(+)-binding positions include 115–119, 139–140, Lys-152, and Lys-161; these read GVVGD and TS. 3 residues coordinate Zn(2+): Glu-194, His-256, and His-275.

This sequence belongs to the sugar phosphate cyclases superfamily. Dehydroquinate synthase family. Requires Co(2+) as cofactor. Zn(2+) serves as cofactor. NAD(+) is required as a cofactor.

Its subcellular location is the cytoplasm. It catalyses the reaction 7-phospho-2-dehydro-3-deoxy-D-arabino-heptonate = 3-dehydroquinate + phosphate. Its pathway is metabolic intermediate biosynthesis; chorismate biosynthesis; chorismate from D-erythrose 4-phosphate and phosphoenolpyruvate: step 2/7. In terms of biological role, catalyzes the conversion of 3-deoxy-D-arabino-heptulosonate 7-phosphate (DAHP) to dehydroquinate (DHQ). In Brucella suis (strain ATCC 23445 / NCTC 10510), this protein is 3-dehydroquinate synthase.